Consider the following 428-residue polypeptide: MGEKERRGQNPKTESNAVELVSCMRVFIPFFWKNFIHDRIFLGAGSLAFQTLLSIVPILAVILSILNVFVVFTPFKRSLEDFLVQNFMPGAGNVLNHYLTDFIGKTASVPILGGVFLFIIALFLISTVDHTLNEIWEVHAPRKALQGFTLYWTVLTLGPVLIGSSLAASSYVWYMVFTDGPLLELKTRLLSFFPFINSVAAFFLLYMLVPNRRVRFVHAFSGALLAALLFELSKRWFTFYITHIATFEHIYGALSVIPMLFFWVYLGWIVVLTGAEFVFCLGALKPVERIADVFSPLRGVPEILSVLAHIWNGQKSGNAMNMKKMLKVIEGLTPSGLRKVIDILLQNGLLHVTVNGDLAISRDLYTMTLYDLYAIIPSGFWGDENGLLISGGNSVHLKTISKGVTECLKNSMDLPLAPLLEDINQQPE.

The next 6 helical transmembrane spans lie at 52-72 (LLSIVPILAVILSILNVFVVF), 108-128 (SVPILGGVFLFIIALFLISTV), 148-168 (FTLYWTVLTLGPVLIGSSLAA), 189-209 (LLSFFPFINSVAAFFLLYMLV), 216-233 (FVHAFSGALLAALLFELS), and 252-272 (GALSVIPMLFFWVYLGWIVVL).

The protein belongs to the UPF0761 family.

It is found in the cell inner membrane. This Pelodictyon phaeoclathratiforme (strain DSM 5477 / BU-1) protein is UPF0761 membrane protein Ppha_1623.